A 795-amino-acid chain; its full sequence is Phenylalanine--tRNA ligase beta subunit (795 aa).

The tRNA-binding domain maps to 39 to 148 (AGSFHGVVVG…ADAPIGTDIR (110 aa)). In terms of domain architecture, B5 spans 401 to 476 (PKRATITLRR…RVYGYNNIPD (76 aa)). Mg(2+) is bound by residues aspartate 454, aspartate 460, glutamate 463, and glutamate 464. Residues 701-794 (SRFPANRRDI…LKERFQASLR (94 aa)) form the FDX-ACB domain.

Belongs to the phenylalanyl-tRNA synthetase beta subunit family. Type 1 subfamily. Tetramer of two alpha and two beta subunits. Requires Mg(2+) as cofactor.

It localises to the cytoplasm. The catalysed reaction is tRNA(Phe) + L-phenylalanine + ATP = L-phenylalanyl-tRNA(Phe) + AMP + diphosphate + H(+). The protein is Phenylalanine--tRNA ligase beta subunit of Shigella sonnei (strain Ss046).